Consider the following 328-residue polypeptide: Naphthalene 1,2-dioxygenase system ferredoxin--NAD(P)(+), reductase component (328 aa).

Residues 1-89 form the 2Fe-2S ferredoxin-type domain; it reads MELLIQPNNR…NCAIEVPEAD (89 aa). Residues Cys35, Cys40, Cys43, and Cys73 each contribute to the [2Fe-2S] cluster site. The 98-residue stretch at 96-193 folds into the FAD-binding FR-type domain; that stretch reads ARIIKGTVVA…SGPLGTAYLR (98 aa).

It belongs to the bacterial ring-hydroxylating dioxygenase ferredoxin reductase component family. The naphthalene dioxygenase (NDO) multicomponent enzyme system is composed of an electron transfer component and a dioxygenase component (iron sulfur protein (ISP)). The electron transfer component is composed of a ferredoxin reductase (NdoR) and a ferredoxin (NdoA), and the dioxygenase component is formed of a heterohexamer (trimer of heterodimers) of three large alpha subunits (NdoB) and three small beta subunits (NdoC). [2Fe-2S] cluster serves as cofactor. It depends on FAD as a cofactor.

The catalysed reaction is 2 reduced [2Fe-2S]-[ferredoxin] + NAD(+) + H(+) = 2 oxidized [2Fe-2S]-[ferredoxin] + NADH. It carries out the reaction 2 reduced [2Fe-2S]-[ferredoxin] + NADP(+) + H(+) = 2 oxidized [2Fe-2S]-[ferredoxin] + NADPH. It participates in aromatic compound metabolism; naphthalene degradation. Its activity is regulated as follows. Strongly inhibited by p-chloromercuribenzoate. Also inhibited by N-ethylmaleimide and o-phenanthroline. Its function is as follows. Component of the naphthalene dioxygenase (NDO) multicomponent enzyme system which catalyzes the incorporation of both atoms of molecular oxygen into naphthalene to form cis-(1R,2S)-dihydroxy-1,2-dihydronaphthalene. Ferredoxin reductase catalyzes the transfer of electrons from NADH to ferredoxin (NdoA). NADPH is also effective but yields only 39% of the activity obtained with NADH. Also able to catalyze the cis-dihydroxylation of biphenyl and phenanthrene. The protein is Naphthalene 1,2-dioxygenase system ferredoxin--NAD(P)(+), reductase component (ndoR) of Pseudomonas putida (Arthrobacter siderocapsulatus).